Consider the following 446-residue polypeptide: Glutamyl-tRNA reductase 2 (446 aa).

Substrate-binding positions include 53-56 (TCNR), S105, 110-112 (EQQ), and Q116. The active-site Nucleophile is the C54. 185–190 (GAGKMG) contacts NADP(+). Residues 409–446 (AAELFGIENETAGGERREGGAEGAAAAPGAGPVRSQGT) form a disordered region. Residues 431–440 (GAAAAPGAGP) show a composition bias toward low complexity.

The protein belongs to the glutamyl-tRNA reductase family. Homodimer.

The catalysed reaction is (S)-4-amino-5-oxopentanoate + tRNA(Glu) + NADP(+) = L-glutamyl-tRNA(Glu) + NADPH + H(+). The protein operates within porphyrin-containing compound metabolism; protoporphyrin-IX biosynthesis; 5-aminolevulinate from L-glutamyl-tRNA(Glu): step 1/2. Catalyzes the NADPH-dependent reduction of glutamyl-tRNA(Glu) to glutamate 1-semialdehyde (GSA). The protein is Glutamyl-tRNA reductase 2 of Anaeromyxobacter dehalogenans (strain 2CP-C).